The primary structure comprises 44 residues: Photosystem I reaction center subunit IX (44 aa).

Residues 7–27 (YLSVAPVLSTLWFGALAGLLI) traverse the membrane as a helical segment.

Belongs to the PsaJ family.

Its subcellular location is the plastid. It is found in the chloroplast thylakoid membrane. Its function is as follows. May help in the organization of the PsaE and PsaF subunits. This is Photosystem I reaction center subunit IX from Solanum bulbocastanum (Wild potato).